Consider the following 348-residue polypeptide: NAC domain-containing protein 101 (348 aa).

The NAC domain occupies 7–156; it reads IPPGYRFHPT…GWVVCRAFKK (150 aa). A DNA-binding region spans residues 107–162; it reads VGMRKTLVFYKGRAPNGQKSDWIMHEYRLETDENGPPHEEGWVVCRAFKKKLTTMN. The segment at 325–348 is disordered; it reads MVSMNASSSSSPCSFYSWAQNTHT. Low complexity predominate over residues 327 to 341; the sequence is SMNASSSSSPCSFYS.

Belongs to the plant vascular related NAC-domain protein family. As to quaternary structure, homodimer. As to expression, expressed in root inner metaxylem vessels and in hypocotyl vessels. Present in root developing xylems. Accumulates in the xylem but not in interfascicular fibers or pith cells in inflorescence stems. Absent from secondary xylem in roots.

It localises to the nucleus. Its function is as follows. Transcription activator that binds to the secondary wall NAC binding element (SNBE), 5'-(T/A)NN(C/T)(T/C/G)TNNNNNNNA(A/C)GN(A/C/T)(A/T)-3', and to the tracheary elements (TE) specific regulating cis-element (TERE), 5'-CTTNAAAGCNA-3', in the promoter of target genes (e.g. genes involved in secondary wall biosynthesis, cell wall modification such as xylan accumulation, and programmed cell death). Involved in xylem formation in roots and shoots, especially regulating metaxylem vessel differentiation by promoting immature xylem vessel-specific genes expression, especially genes regulating programmed cell death (PCD) and secondary wall formation in tracheary elements (TE). Can activate MYB25, MYB46, MYB58, MYB63, MYB83, MYB103, CESA4, LBD15, LBD30, ERF115, XCP1, XCP2, NAC010/SND3, KNAT7, ASL19 and ASL20 expression. This is NAC domain-containing protein 101 from Arabidopsis thaliana (Mouse-ear cress).